We begin with the raw amino-acid sequence, 350 residues long: Probable L-aspartate decarboxylase (350 aa).

An N6-(pyridoxal phosphate)lysine modification is found at Lys-206.

Belongs to the group II decarboxylase family. MfnA subfamily. Pyridoxal 5'-phosphate is required as a cofactor.

The enzyme catalyses L-aspartate + H(+) = beta-alanine + CO2. It participates in cofactor biosynthesis; coenzyme A biosynthesis. Catalyzes the decarboxylation of L-aspartate to produce beta-alanine. In Haloarcula marismortui (strain ATCC 43049 / DSM 3752 / JCM 8966 / VKM B-1809) (Halobacterium marismortui), this protein is Probable L-aspartate decarboxylase.